A 72-amino-acid chain; its full sequence is Conotoxin im23a (72 aa).

Residues 1-22 (MIMRMTLTLFVLVVMTAASASG) form the signal peptide. Residues 23–28 (DALTEA) constitute a propeptide that is removed on maturation. Disulfide bonds link cysteine 34–cysteine 41, cysteine 45–cysteine 55, and cysteine 56–cysteine 71.

It belongs to the conotoxin K superfamily. As to expression, expressed by the venom duct.

It is found in the secreted. Neurotoxin that induces excitatory symptoms in mice following intracranial administration. No symptoms are observed after intraperitoneal and intravenous (tail vein) injections. The polypeptide is Conotoxin im23a (Conus imperialis (Imperial cone)).